The following is a 437-amino-acid chain: tRNA(Ile)-lysidine synthase (437 aa).

22-27 contributes to the ATP binding site; the sequence is SGGLDS.

This sequence belongs to the tRNA(Ile)-lysidine synthase family.

The protein localises to the cytoplasm. The catalysed reaction is cytidine(34) in tRNA(Ile2) + L-lysine + ATP = lysidine(34) in tRNA(Ile2) + AMP + diphosphate + H(+). In terms of biological role, ligates lysine onto the cytidine present at position 34 of the AUA codon-specific tRNA(Ile) that contains the anticodon CAU, in an ATP-dependent manner. Cytidine is converted to lysidine, thus changing the amino acid specificity of the tRNA from methionine to isoleucine. This chain is tRNA(Ile)-lysidine synthase, found in Xylella fastidiosa (strain 9a5c).